Reading from the N-terminus, the 360-residue chain is Peptide chain release factor 1 (360 aa).

An N5-methylglutamine modification is found at Q235. Residues 280–293 (DKQSHEQQAKEAAT) show a composition bias toward basic and acidic residues. The disordered stretch occupies residues 280–300 (DKQSHEQQAKEAATRKSLIGS).

The protein belongs to the prokaryotic/mitochondrial release factor family. In terms of processing, methylated by PrmC. Methylation increases the termination efficiency of RF1.

Its subcellular location is the cytoplasm. In terms of biological role, peptide chain release factor 1 directs the termination of translation in response to the peptide chain termination codons UAG and UAA. In Paraburkholderia phytofirmans (strain DSM 17436 / LMG 22146 / PsJN) (Burkholderia phytofirmans), this protein is Peptide chain release factor 1.